Consider the following 626-residue polypeptide: Endo-1,3(4)-beta-glucanase xgeA (626 aa).

Residues 1-25 (MSSSLMRRVGSLAASAIIFPGIAHA) form the signal peptide. The GH16 domain occupies 33–286 (ESWEGEKILN…WAGGVFGDSG (254 aa)). An N-linked (GlcNAc...) asparagine glycan is attached at Asn-61. The Nucleophile role is filled by Glu-142. Glu-147 serves as the catalytic Proton donor. Residues 477-494 (ASTDAAAATTPAAEPHPS) show a composition bias toward low complexity. Residues 477–533 (ASTDAAAATTPAAEPHPSNAETPADSKSSADAVTAQATKTTIAVNTPNPATDSASSV) form a disordered region. Polar residues predominate over residues 495–533 (NAETPADSKSSADAVTAQATKTTIAVNTPNPATDSASSV). Gly-603 is lipidated: GPI-anchor amidated glycine. Positions 604-626 (VGSKVSISASVAIAAFVMLLLVN) are cleaved as a propeptide — removed in mature form.

This sequence belongs to the glycosyl hydrolase 16 family.

Its subcellular location is the cell membrane. The catalysed reaction is Endohydrolysis of (1-&gt;3)- or (1-&gt;4)-linkages in beta-D-glucans when the glucose residue whose reducing group is involved in the linkage to be hydrolyzed is itself substituted at C-3.. Mixed-linked glucanase involved in the degradation of complex natural cellulosic substrates. Active on laminarin. lichenan, soluble carboxymethyl cellulose but not on pustulan. In Emericella nidulans (strain FGSC A4 / ATCC 38163 / CBS 112.46 / NRRL 194 / M139) (Aspergillus nidulans), this protein is Endo-1,3(4)-beta-glucanase xgeA (xgeA).